A 264-amino-acid polypeptide reads, in one-letter code: 3-methyl-2-oxobutanoate hydroxymethyltransferase 2 (264 aa).

Residues aspartate 44 and aspartate 83 each coordinate Mg(2+). Residues 44–45, aspartate 83, and lysine 111 contribute to the 3-methyl-2-oxobutanoate site; that span reads DS. Mg(2+) is bound at residue glutamate 113. The active-site Proton acceptor is the glutamate 180.

Belongs to the PanB family. In terms of assembly, homodecamer; pentamer of dimers. Mg(2+) serves as cofactor.

The protein resides in the cytoplasm. The catalysed reaction is 3-methyl-2-oxobutanoate + (6R)-5,10-methylene-5,6,7,8-tetrahydrofolate + H2O = 2-dehydropantoate + (6S)-5,6,7,8-tetrahydrofolate. Its pathway is cofactor biosynthesis; (R)-pantothenate biosynthesis; (R)-pantoate from 3-methyl-2-oxobutanoate: step 1/2. Catalyzes the reversible reaction in which hydroxymethyl group from 5,10-methylenetetrahydrofolate is transferred onto alpha-ketoisovalerate to form ketopantoate. This is 3-methyl-2-oxobutanoate hydroxymethyltransferase 2 from Hahella chejuensis (strain KCTC 2396).